The chain runs to 235 residues: Effector CFEM1 (235 aa).

The first 17 residues, 1–17, serve as a signal peptide directing secretion; sequence MKFSAPVLAIFLASASA. Residues 18 to 114 form the CFEM domain; it reads QSTAELAAQI…ASASASSSAS (97 aa). Intrachain disulfides connect Cys-30/Cys-72, Cys-34/Cys-67, Cys-44/Cys-51, and Cys-53/Cys-88. Position 48 (Asp-48) interacts with heme. The GPI-anchor amidated threonine moiety is linked to residue Thr-211. The propeptide at 212 to 235 is removed in mature form; it reads AAGVKEEASFFIPAAVALFAVFAV.

This sequence belongs to the RBT5 family.

It localises to the cell membrane. It is found in the secreted. The protein resides in the host cytoplasm. The protein localises to the host nucleus. Its subcellular location is the host cell membrane. Functionally, appears to function during host infection, and may play a role in suppressing the host immune response. In Marssonina brunnea f. sp. multigermtubi (strain MB_m1) (Marssonina leaf spot fungus), this protein is Effector CFEM1.